The sequence spans 370 residues: DNA replication and repair protein RecF (370 aa).

ATP is bound at residue 30 to 37; that stretch reads GENAQGKT.

The protein belongs to the RecF family.

It localises to the cytoplasm. Functionally, the RecF protein is involved in DNA metabolism; it is required for DNA replication and normal SOS inducibility. RecF binds preferentially to single-stranded, linear DNA. It also seems to bind ATP. The protein is DNA replication and repair protein RecF of Staphylococcus aureus (strain bovine RF122 / ET3-1).